A 626-amino-acid polypeptide reads, in one-letter code: Phosphomethylpyrimidine synthase (626 aa).

Positions 1–22 are disordered; the sequence is MTKQEKAINLSESAQVDQQSVQ. Positions 10–22 are enriched in polar residues; it reads LSESAQVDQQSVQ. Substrate-binding positions include asparagine 232, methionine 261, tyrosine 290, histidine 326, 346-348, 387-390, and glutamate 426; these read SRG and DGLR. Residue histidine 430 coordinates Zn(2+). Position 453 (tyrosine 453) interacts with substrate. A Zn(2+)-binding site is contributed by histidine 494. Cysteine 574, cysteine 577, and cysteine 582 together coordinate [4Fe-4S] cluster.

This sequence belongs to the ThiC family. Homodimer. Requires [4Fe-4S] cluster as cofactor.

The enzyme catalyses 5-amino-1-(5-phospho-beta-D-ribosyl)imidazole + S-adenosyl-L-methionine = 4-amino-2-methyl-5-(phosphooxymethyl)pyrimidine + CO + 5'-deoxyadenosine + formate + L-methionine + 3 H(+). The protein operates within cofactor biosynthesis; thiamine diphosphate biosynthesis. Catalyzes the synthesis of the hydroxymethylpyrimidine phosphate (HMP-P) moiety of thiamine from aminoimidazole ribotide (AIR) in a radical S-adenosyl-L-methionine (SAM)-dependent reaction. This is Phosphomethylpyrimidine synthase from Pseudomonas putida (strain ATCC 47054 / DSM 6125 / CFBP 8728 / NCIMB 11950 / KT2440).